The sequence spans 112 residues: Elongin-C (112 aa).

Belongs to the SKP1 family. In terms of assembly, heterotrimer of an A (ELOA, ELOA2 or ELOA3P), ELOB and ELOC subunit. The elongin BC complex interacts with EPOP; leading to recruit the elongin BC complex to Polycomb group (PcG) target genes, thereby restricting excessive activity of the PRC2/EED-EZH2 complex. Component of multiple cullin-RING E3 ubiquitin-protein ligase complexes composed of Elongin BC (ELOB and ELOC), a cullin (CUL2 or CUL5), a catalytic subunit (RBX1 or RNF7/RBX2), as well as a substrate adapter protein that can be either ASB2, ASB9, ASB11, KLHDC2, KLHDC3, KLHDC10, APPBP2, FEM1A, FEM1B, FEM1C, LRR1, PCMTD1, SOCS1, SOCS2, SOCS5, SPSB1, SPSB3, ELOA, VHL, WSB1, ZYG11B or RAB40C. Interacts with TMF1. As part of the Elongin BC E3 ubiquitin ligase complex; interacts with NRBP1. May form oligomers as a KLHDC2/KLHDC3-ELOB-ELOC complex; this interaction is autoinhibitory for the E3 ligase complex as the substrate-binding site of KLHDC2/KLHDC3 is blocked in the oligomer. Ubiquitinated by the DCX(AMBRA1) complex, leading to its degradation by the proteasome.

The protein resides in the nucleus. It participates in protein modification; protein ubiquitination. Its function is as follows. SIII, also known as elongin, is a general transcription elongation factor that increases the RNA polymerase II transcription elongation past template-encoded arresting sites. Subunit A is transcriptionally active and its transcription activity is strongly enhanced by binding to the dimeric complex of the SIII regulatory subunits B and C (elongin BC complex). In embryonic stem cells, the elongin BC complex is recruited by EPOP to Polycomb group (PcG) target genes in order generate genomic region that display both active and repressive chromatin properties, an important feature of pluripotent stem cells. Functionally, core component of multiple cullin-RING-based ECS (ElonginB/C-CUL2/5-SOCS-box protein) E3 ubiquitin-protein ligase complexes, which mediate the ubiquitination of target proteins. By binding to BC-box motifs it seems to link target recruitment subunits, like VHL and members of the SOCS box family, to Cullin/RBX1 modules that activate E2 ubiquitination enzymes. Component the von Hippel-Lindau ubiquitination complex CBC(VHL). A number of ECS complexes (containing either KLHDC2, KLHDC3, KLHDC10, APPBP2, FEM1A, FEM1B or FEM1C as substrate-recognition component) are part of the DesCEND (destruction via C-end degrons) pathway, which recognizes a C-degron located at the extreme C terminus of target proteins, leading to their ubiquitination and degradation. The ECS(ASB9) complex mediates ubiquitination and degradation of CKB. As part of a multisubunit ubiquitin ligase complex, polyubiquitinates monoubiquitinated POLR2A. ECS(LRR1) ubiquitinates MCM7 and promotes CMG replisome disassembly by VCP and chromatin extraction during S-phase. As part of the ECS(RAB40C) complex, mediates ANKRD28 ubiquitination and degradation, thereby inhibiting protein phosphatase 6 (PP6) complex activity and focal adhesion assembly during cell migration. The protein is Elongin-C (ELOC) of Bos taurus (Bovine).